The primary structure comprises 395 residues: Ribosomal RNA large subunit methyltransferase I (395 aa).

The region spanning 2–79 (SSRVTLHPGR…QNESVDNGFF (78 aa)) is the PUA domain.

It belongs to the methyltransferase superfamily. RlmI family.

The protein resides in the cytoplasm. It catalyses the reaction cytidine(1962) in 23S rRNA + S-adenosyl-L-methionine = 5-methylcytidine(1962) in 23S rRNA + S-adenosyl-L-homocysteine + H(+). Functionally, specifically methylates the cytosine at position 1962 (m5C1962) of 23S rRNA. In Pseudoalteromonas atlantica (strain T6c / ATCC BAA-1087), this protein is Ribosomal RNA large subunit methyltransferase I.